Here is a 92-residue protein sequence, read N- to C-terminus: Regakine-1 (92 aa).

An N-terminal signal peptide occupies residues 1–21 (MRVSLAALAFLLTLAVLHSEA). 2 disulfide bridges follow: Cys-32–Cys-56 and Cys-33–Cys-72.

It belongs to the intercrine beta (chemokine CC) family. Plasma serum.

It localises to the secreted. In terms of biological role, chemotactic activity for neutrophils and lymphocytes. Binds to heparin. The protein is Regakine-1 of Bos taurus (Bovine).